Reading from the N-terminus, the 90-residue chain is DNA-binding protein HRm (90 aa).

Belongs to the bacterial histone-like protein family.

In terms of biological role, histone-like DNA-binding protein which is capable of wrapping DNA to stabilize it, and thus to prevent its denaturation under extreme environmental conditions. This is DNA-binding protein HRm (hupB) from Rhizobium meliloti (strain 1021) (Ensifer meliloti).